The chain runs to 88 residues: UPF0297 protein Ccel_2240 (88 aa).

This sequence belongs to the UPF0297 family.

The sequence is that of UPF0297 protein Ccel_2240 from Ruminiclostridium cellulolyticum (strain ATCC 35319 / DSM 5812 / JCM 6584 / H10) (Clostridium cellulolyticum).